The following is a 467-amino-acid chain: Chlorophenol O-methyltransferase (467 aa).

The tract at residues Met-1–Ser-41 is disordered. 2 stretches are compositionally biased toward polar residues: residues Ser-8–Thr-21 and Leu-31–Ser-41. Asp-320 contacts S-adenosyl-L-methionine. His-368 serves as the catalytic Proton acceptor.

Belongs to the class I-like SAM-binding methyltransferase superfamily. Cation-independent O-methyltransferase family.

The catalysed reaction is 2,4,6-trichlorophenol + S-adenosyl-L-methionine = 2,4,6-trichloroanisole + S-adenosyl-L-homocysteine. With respect to regulation, S-adenosyl-L-homocysteine acts as a competitive inhibitor. Also strongly inhibited by low concentrations of several metal ions, such as Cu(2+), Hg(2+), Zn(2+), and Ag(+), and to a lesser extent by p-chloromercuribenzoic acid, but it is not significantly affected by several thiols or other thiol reagents. In terms of biological role, chlorophenol O-methyltransferase that methylates chlorophenols into chloroanisoles which are thought to be responsible for cork taint of wines. The only single chlorophenol (CP) methylated is 2-CP; neither 3-CP nor 4-CP are effective substrates. Within the dichlorophenols (DCPs), 2,4-DCP supports the highest rate of O-methylation, and the activity decreases in the following order: 2,3-DCP, 2,5-DCP, 2,6-DCP, and 3,4-DCP. Within the trichlorophenol (TCP) group, the maximal activity is observed with 2,3,4-TCP, whereas there is increasingly reduced activity with 2,4,5-TCP, 2,4,6-TCP, and 2,3,6-TCP. The only tetrachlorophenol (TeCP) that is methylated is 2,3,4,5-TeCP, since no activity can be detected with 2,3,4,6-TeCP and 2,3,5,6-TeCP. Is also able to methylate other halogenated phenols containing fluoro or bromo substituents, whereas other hydroxylated compounds, such as hydroxylated benzoic acids, hydroxybenzaldehydes, phenol, 2-metoxyphenol, and dihydroxybenzene, were not methylated. The polypeptide is Chlorophenol O-methyltransferase (Trichoderma longibrachiatum).